A 308-amino-acid polypeptide reads, in one-letter code: 4-hydroxy-3-methylbut-2-enyl diphosphate reductase (308 aa).

C12 contacts [4Fe-4S] cluster. (2E)-4-hydroxy-3-methylbut-2-enyl diphosphate is bound by residues H41 and H74. Dimethylallyl diphosphate contacts are provided by H41 and H74. Positions 41 and 74 each coordinate isopentenyl diphosphate. C96 contacts [4Fe-4S] cluster. H124 is a (2E)-4-hydroxy-3-methylbut-2-enyl diphosphate binding site. Position 124 (H124) interacts with dimethylallyl diphosphate. Residue H124 coordinates isopentenyl diphosphate. E126 functions as the Proton donor in the catalytic mechanism. Residue T166 participates in (2E)-4-hydroxy-3-methylbut-2-enyl diphosphate binding. Residue C196 coordinates [4Fe-4S] cluster. S224, S225, N226, and S268 together coordinate (2E)-4-hydroxy-3-methylbut-2-enyl diphosphate. Positions 224, 225, 226, and 268 each coordinate dimethylallyl diphosphate. S224, S225, N226, and S268 together coordinate isopentenyl diphosphate.

This sequence belongs to the IspH family. [4Fe-4S] cluster serves as cofactor.

The enzyme catalyses isopentenyl diphosphate + 2 oxidized [2Fe-2S]-[ferredoxin] + H2O = (2E)-4-hydroxy-3-methylbut-2-enyl diphosphate + 2 reduced [2Fe-2S]-[ferredoxin] + 2 H(+). It catalyses the reaction dimethylallyl diphosphate + 2 oxidized [2Fe-2S]-[ferredoxin] + H2O = (2E)-4-hydroxy-3-methylbut-2-enyl diphosphate + 2 reduced [2Fe-2S]-[ferredoxin] + 2 H(+). It participates in isoprenoid biosynthesis; dimethylallyl diphosphate biosynthesis; dimethylallyl diphosphate from (2E)-4-hydroxy-3-methylbutenyl diphosphate: step 1/1. It functions in the pathway isoprenoid biosynthesis; isopentenyl diphosphate biosynthesis via DXP pathway; isopentenyl diphosphate from 1-deoxy-D-xylulose 5-phosphate: step 6/6. Catalyzes the conversion of 1-hydroxy-2-methyl-2-(E)-butenyl 4-diphosphate (HMBPP) into a mixture of isopentenyl diphosphate (IPP) and dimethylallyl diphosphate (DMAPP). Acts in the terminal step of the DOXP/MEP pathway for isoprenoid precursor biosynthesis. The sequence is that of 4-hydroxy-3-methylbut-2-enyl diphosphate reductase from Vesicomyosocius okutanii subsp. Calyptogena okutanii (strain HA).